A 527-amino-acid polypeptide reads, in one-letter code: MESAAALHFSRPASLLLLLLSLCALVSAQFIVVGPTDPILATVGENTTLRCHLSPEKNAEDMEVRWFRSQFSPAVFVYKGGRERTEEQMEEYRGRTTFVSKDISRGSVALVIHNITAQENGTYRCYFQEGRSYDEAILHLVVAGLGSKPLISMRGHEDGGIRLECISRGWYPKPLTVWRDPYGGVAPALKEVSMPDADGLFMVTTAVIIRDKSVRNMSCSINNTLLGQKKESVIFIPESFMPSVSPCAVALPIIVVILMIPIAVCIYWINKLQKEKKILSGEKEFERETREIALKELEKERVQKEEELQVKEKLQEELRWRRTFLHAVDVVLDPDTAHPDLFLSEDRRSVRRCPFRHLGESVPDNPERFDSQPCVLGRESFASGKHYWEVEVENVIEWTVGVCRDSVERKGEVLLIPQNGFWTLEMHKGQYRAVSSPDRILPLKESLCRVGVFLDYEAGDVSFYNMRDRSHIYTCPRSAFSVPVRPFFRLGCEDSPIFICPALTGANGVTVPEEGLTLHRVGTHQSL.

An N-terminal signal peptide occupies residues 1–28; the sequence is MESAAALHFSRPASLLLLLLSLCALVSA. The Ig-like V-type domain maps to 29–141; it reads QFIVVGPTDP…SYDEAILHLV (113 aa). Residues 29–248 are Extracellular-facing; that stretch reads QFIVVGPTDP…SFMPSVSPCA (220 aa). N-linked (GlcNAc...) asparagine glycans are attached at residues Asn-46, Asn-114, and Asn-120. Cysteines 51 and 125 form a disulfide. Residues 249-269 traverse the membrane as a helical segment; it reads VALPIIVVILMIPIAVCIYWI. The Cytoplasmic portion of the chain corresponds to 270-527; it reads NKLQKEKKIL…LHRVGTHQSL (258 aa). A B30.2/SPRY domain is found at 310–506; the sequence is VKEKLQEELR…IFICPALTGA (197 aa).

The protein belongs to the immunoglobulin superfamily. BTN/MOG family. As to expression, highly expressed in brain, bone marrow, small intestine, muscle, spleen and pancreas. Moderate expression was seen in lung, liver and kidney.

It is found in the membrane. This Homo sapiens (Human) protein is Butyrophilin subfamily 2 member A1 (BTN2A1).